Consider the following 509-residue polypeptide: Monocarboxylate transporter 9 (509 aa).

Residues 1-12 are Cytoplasmic-facing; that stretch reads MELKKSPDGGWG. The next 12 helical transmembrane spans lie at 13-33, 53-73, 80-100, 102-122, 137-157, 164-184, 305-325, 342-362, 372-392, 398-418, 433-453, and 462-482; these read WVIV…PLAV, WVGS…SLCV, PVTI…SFAP, IYFL…LLYT, GLAL…YAAL, FYGL…ILAC, VFSA…PPSL, IMPL…LLGI, LYLY…IPFA, LALL…FPYV, GILM…VGWF, and IAFY…LLAA. Residues 483–509 are Cytoplasmic-facing; sequence LPSWDTCNKQLPKPAPTTFLYKVASNV.

The protein belongs to the major facilitator superfamily. Monocarboxylate porter (TC 2.A.1.13) family.

It is found in the cell membrane. The catalysed reaction is creatine(in) = creatine(out). The enzyme catalyses (R)-carnitine(in) = (R)-carnitine(out). Extracellular pH-and Na(+)-sensitive low-affinity creatine transporter. Also functions as a pH-independent carnitine efflux transporter. In Pongo abelii (Sumatran orangutan), this protein is Monocarboxylate transporter 9 (SLC16A9).